The following is a 637-amino-acid chain: Biosynthetic arginine decarboxylase (637 aa).

K101 carries the post-translational modification N6-(pyridoxal phosphate)lysine. 286–296 (FDVGGGLAVDY) contributes to the substrate binding site.

It belongs to the Orn/Lys/Arg decarboxylase class-II family. SpeA subfamily. It depends on Mg(2+) as a cofactor. Pyridoxal 5'-phosphate serves as cofactor.

The catalysed reaction is L-arginine + H(+) = agmatine + CO2. The protein operates within amine and polyamine biosynthesis; agmatine biosynthesis; agmatine from L-arginine: step 1/1. In terms of biological role, catalyzes the biosynthesis of agmatine from arginine. The sequence is that of Biosynthetic arginine decarboxylase from Shewanella piezotolerans (strain WP3 / JCM 13877).